The chain runs to 366 residues: MFTRKSVILMAVLLIWSAVSYAERVKDLANVAGVRPNQLIGYGLVVGLSGTGDKTSYADQSLMSMLNKFGINLPPGTKTNSKNVAAVAVHADLPAFSKSGQRIDVTVSSLGNAKSLRGGTLLLTPLKGVDGNVYALAQGNLIVGGLDASGADGSRITVNVPSVGRVPGGGIVEKTVNTGFDLGNTITLNLKNSDFTTATNLVNAINAKLGKGTAYATDAESVEVMAPRIPNQRVAFLSVIENIEVTPGVDSAKVIINSRTGTVVIGSNVKVSAAAVTHGNLVVKVSESKDVSQPNPFAGGNTQVTPKTELSVESEGKGRMFKFPKGVTLDDIVQAVNKVGAAPGDLVAILEALKQSGALSADLMVI.

A signal peptide spans 1 to 22 (MFTRKSVILMAVLLIWSAVSYA).

The protein belongs to the FlgI family. The basal body constitutes a major portion of the flagellar organelle and consists of four rings (L,P,S, and M) mounted on a central rod.

It is found in the periplasm. The protein resides in the bacterial flagellum basal body. Functionally, assembles around the rod to form the L-ring and probably protects the motor/basal body from shearing forces during rotation. This is Flagellar P-ring protein from Hydrogenovibrio crunogenus (strain DSM 25203 / XCL-2) (Thiomicrospira crunogena).